A 327-amino-acid chain; its full sequence is UPF0065 protein in gbd 5'region (327 aa).

The segment at residues 1-30 (MQRRHFIARAGIAAATAALGLAAMPAQAQA) is a signal peptide (tat-type signal).

The protein belongs to the UPF0065 (bug) family. Post-translationally, predicted to be exported by the Tat system. The position of the signal peptide cleavage has not been experimentally proven.

It localises to the periplasm. This is UPF0065 protein in gbd 5'region from Cupriavidus necator (Alcaligenes eutrophus).